Here is a 331-residue protein sequence, read N- to C-terminus: Ketol-acid reductoisomerase (NADP(+)) (331 aa).

The KARI N-terminal Rossmann domain maps to 2–182 (AKIYTDKDAS…GATRAGVIET (181 aa)). Residues 25-28 (YGIQ), arginine 48, serine 53, and 83-86 (DMEQ) each bind NADP(+). The active site involves histidine 108. Position 134 (glycine 134) interacts with NADP(+). One can recognise a KARI C-terminal knotted domain in the interval 183–328 (TFAEETETDL…AEMRKLLFGR (146 aa)). Aspartate 191, glutamate 195, glutamate 227, and glutamate 231 together coordinate Mg(2+). Serine 252 contributes to the substrate binding site.

The protein belongs to the ketol-acid reductoisomerase family. Requires Mg(2+) as cofactor.

It carries out the reaction (2R)-2,3-dihydroxy-3-methylbutanoate + NADP(+) = (2S)-2-acetolactate + NADPH + H(+). The catalysed reaction is (2R,3R)-2,3-dihydroxy-3-methylpentanoate + NADP(+) = (S)-2-ethyl-2-hydroxy-3-oxobutanoate + NADPH + H(+). The protein operates within amino-acid biosynthesis; L-isoleucine biosynthesis; L-isoleucine from 2-oxobutanoate: step 2/4. Its pathway is amino-acid biosynthesis; L-valine biosynthesis; L-valine from pyruvate: step 2/4. Involved in the biosynthesis of branched-chain amino acids (BCAA). Catalyzes an alkyl-migration followed by a ketol-acid reduction of (S)-2-acetolactate (S2AL) to yield (R)-2,3-dihydroxy-isovalerate. In the isomerase reaction, S2AL is rearranged via a Mg-dependent methyl migration to produce 3-hydroxy-3-methyl-2-ketobutyrate (HMKB). In the reductase reaction, this 2-ketoacid undergoes a metal-dependent reduction by NADPH to yield (R)-2,3-dihydroxy-isovalerate. The chain is Ketol-acid reductoisomerase (NADP(+)) from Pyrobaculum islandicum (strain DSM 4184 / JCM 9189 / GEO3).